The following is a 262-amino-acid chain: MAASMAPRCSSLLWAGAAWLRQRGIGELLQPRIERSTPGRDFSLSHYQSTVIVERWWKVPLAGEGRKPRLHRRHRVYKLVEDTKHRPKDHLELILTQSVDEIGVRGDLVSVKKSVGRNKLLPQGLAVYASPENRKLFEEEKLLRQEGKLEKIQTKAGEATVKFLRSCRLEVGMKNNVKWELNPEIVARHFFKNLGVVVAPHALRLPEDPITRWGEYWCDVTVNGLDTVRVPMSVVLFRKPKTKRYKHWLAQQAAKITSPEAV.

The N-terminal 49 residues, 1–49 (MAASMAPRCSSLLWAGAAWLRQRGIGELLQPRIERSTPGRDFSLSHYQS), are a transit peptide targeting the mitochondrion.

The protein belongs to the bacterial ribosomal protein bL9 family. Component of the mitochondrial ribosome large subunit (39S) which comprises a 16S rRNA and about 50 distinct proteins.

The protein resides in the mitochondrion. The chain is Large ribosomal subunit protein bL9m (Mrpl9) from Rattus norvegicus (Rat).